The sequence spans 320 residues: Methionyl-tRNA formyltransferase (320 aa).

112–115 is a (6S)-5,6,7,8-tetrahydrofolate binding site; sequence SILP.

This sequence belongs to the Fmt family.

The catalysed reaction is L-methionyl-tRNA(fMet) + (6R)-10-formyltetrahydrofolate = N-formyl-L-methionyl-tRNA(fMet) + (6S)-5,6,7,8-tetrahydrofolate + H(+). Its function is as follows. Attaches a formyl group to the free amino group of methionyl-tRNA(fMet). The formyl group appears to play a dual role in the initiator identity of N-formylmethionyl-tRNA by promoting its recognition by IF2 and preventing the misappropriation of this tRNA by the elongation apparatus. The chain is Methionyl-tRNA formyltransferase from Shewanella woodyi (strain ATCC 51908 / MS32).